Consider the following 395-residue polypeptide: Sulfate adenylyltransferase (395 aa).

This sequence belongs to the sulfate adenylyltransferase family.

It carries out the reaction sulfate + ATP + H(+) = adenosine 5'-phosphosulfate + diphosphate. Its pathway is sulfur metabolism; hydrogen sulfide biosynthesis; sulfite from sulfate: step 1/3. The protein is Sulfate adenylyltransferase of Synechococcus elongatus (strain ATCC 33912 / PCC 7942 / FACHB-805) (Anacystis nidulans R2).